The primary structure comprises 363 residues: Probable F-box protein At4g22165 (363 aa).

The region spanning 7-56 (PNTWSELPLDLLNLVFKRLSLVNFQRAKSVCSTRYSVSRQCVPERQIALL) is the F-box domain.

In Arabidopsis thaliana (Mouse-ear cress), this protein is Probable F-box protein At4g22165.